A 361-amino-acid chain; its full sequence is Histidinol-phosphate aminotransferase (361 aa).

At K218 the chain carries N6-(pyridoxal phosphate)lysine.

This sequence belongs to the class-II pyridoxal-phosphate-dependent aminotransferase family. Histidinol-phosphate aminotransferase subfamily. As to quaternary structure, homodimer. Pyridoxal 5'-phosphate is required as a cofactor.

It carries out the reaction L-histidinol phosphate + 2-oxoglutarate = 3-(imidazol-4-yl)-2-oxopropyl phosphate + L-glutamate. It participates in amino-acid biosynthesis; L-histidine biosynthesis; L-histidine from 5-phospho-alpha-D-ribose 1-diphosphate: step 7/9. In Ruegeria pomeroyi (strain ATCC 700808 / DSM 15171 / DSS-3) (Silicibacter pomeroyi), this protein is Histidinol-phosphate aminotransferase.